We begin with the raw amino-acid sequence, 577 residues long: Proton channel OTOP3 (577 aa).

Residues 1 to 46 (MASQTSAPAEPAPMPSPEAKTTEGASSYDQADMETKHAGSPCPPKQ) form a disordered region. Residues 1–69 (MASQTSAPAE…RDRQAQKAGQ (69 aa)) are Cytoplasmic-facing. Residues 70–90 (LFSGLLALNVVFLGGAFICSM) form a helical membrane-spanning segment. Topologically, residues 91–100 (IFNKVSVTLG) are extracellular. A helical membrane pass occupies residues 101–124 (DVWILLAALKVLSLLWLLYYTVGT). Over 125–140 (TRKPHAVLYRDPHAGP) the chain is Cytoplasmic. A helical membrane pass occupies residues 141–162 (IWVRGSLVLFGSCTVCLNIFRM). Residues 163–174 (GYDVSHIHCKSE) are Extracellular-facing. Residues 175–198 (VELIFPAIEIVFMIIQTWVLWRHC) form a helical membrane-spanning segment. At 199–206 (KDCVQVQT) the chain is on the cytoplasmic side. Residues 207–229 (NFTRCGLMLTLATNLLMWVLAVT) form a helical membrane-spanning segment. Residues 230–276 (NDSMHREIEAELDALMEKFSGNGTNTCMCLNTTVCEVFRKGYLMLYP) lie on the Extracellular side of the membrane. A helical transmembrane segment spans residues 277–293 (FSTEYCLICCAVLFVMW). At 294 to 319 (KNVSRSLAAHTGAHPNRSPFRLHGTI) the chain is on the cytoplasmic side. A helical membrane pass occupies residues 320-339 (FGPLLGLLALVAGVCVFVLF). Residues 340–353 (QIEASGPDIARQYF) are Extracellular-facing. Residues 354 to 376 (TLYYAFYVAVLPTMSLACLAGTA) form a helical membrane-spanning segment. Over 377-394 (IHGLEERELDTLKNPTRS) the chain is Cytoplasmic. Residues 395–416 (LDVVLLMGAALGQMGIAYFSIV) traverse the membrane as a helical segment. At 417 to 427 (AIVATQPHELL) the chain is on the extracellular side. Residues 428-450 (NQLILAYSLLLILQHITQNLFII) traverse the membrane as a helical segment. The Cytoplasmic segment spans residues 451 to 510 (EGLHRRPLWEPAVSGVMEKQDVELPRRGSLRELGQDLRRASRAYIHSFSHLNWKRRMLKE). Residues 511–528 (ISLFLILCNITLWMMPAF) traverse the membrane as a helical segment. The Extracellular portion of the chain corresponds to 529-547 (GIHPEFENGLEKDFYGYRT). A helical membrane pass occupies residues 548 to 570 (WFTIVNFGLPLGVFYRMHSVGGL). At 571-577 (VEVYLGA) the chain is on the cytoplasmic side.

Belongs to the otopetrin family. As to quaternary structure, homodimer. In terms of tissue distribution, expressed in epidermis, small intestine, stomach and retina.

It localises to the cell membrane. It carries out the reaction H(+)(in) = H(+)(out). Its activity is regulated as follows. Activated by extracellular acidification. Activated by Zn(2+) under non-acidic conditions. Proton-selective channel gated by extracellular protons. The sequence is that of Proton channel OTOP3 from Mus musculus (Mouse).